The primary structure comprises 436 residues: Trigger factor (436 aa).

The PPIase FKBP-type domain maps to 162 to 247 (GDRVIIDFEG…LNNVSEATLP (86 aa)).

This sequence belongs to the FKBP-type PPIase family. Tig subfamily.

It is found in the cytoplasm. It catalyses the reaction [protein]-peptidylproline (omega=180) = [protein]-peptidylproline (omega=0). Involved in protein export. Acts as a chaperone by maintaining the newly synthesized protein in an open conformation. Functions as a peptidyl-prolyl cis-trans isomerase. In Neisseria meningitidis serogroup C (strain 053442), this protein is Trigger factor.